A 236-amino-acid polypeptide reads, in one-letter code: Leucyl/phenylalanyl-tRNA--protein transferase (236 aa).

The protein belongs to the L/F-transferase family.

It localises to the cytoplasm. It carries out the reaction N-terminal L-lysyl-[protein] + L-leucyl-tRNA(Leu) = N-terminal L-leucyl-L-lysyl-[protein] + tRNA(Leu) + H(+). The enzyme catalyses N-terminal L-arginyl-[protein] + L-leucyl-tRNA(Leu) = N-terminal L-leucyl-L-arginyl-[protein] + tRNA(Leu) + H(+). It catalyses the reaction L-phenylalanyl-tRNA(Phe) + an N-terminal L-alpha-aminoacyl-[protein] = an N-terminal L-phenylalanyl-L-alpha-aminoacyl-[protein] + tRNA(Phe). In terms of biological role, functions in the N-end rule pathway of protein degradation where it conjugates Leu, Phe and, less efficiently, Met from aminoacyl-tRNAs to the N-termini of proteins containing an N-terminal arginine or lysine. This Shewanella putrefaciens (strain CN-32 / ATCC BAA-453) protein is Leucyl/phenylalanyl-tRNA--protein transferase.